Reading from the N-terminus, the 317-residue chain is Serine/threonine-protein phosphatase PP1 isozyme 1 (317 aa).

Mn(2+)-binding residues include D75, H77, D103, and N135. The Proton donor role is filled by H136. The Mn(2+) site is built by H184 and H259.

It belongs to the PPP phosphatase family. PP-1 subfamily. Mn(2+) serves as cofactor.

The enzyme catalyses O-phospho-L-seryl-[protein] + H2O = L-seryl-[protein] + phosphate. It catalyses the reaction O-phospho-L-threonyl-[protein] + H2O = L-threonyl-[protein] + phosphate. In Nicotiana tabacum (Common tobacco), this protein is Serine/threonine-protein phosphatase PP1 isozyme 1 (NPP1).